Here is a 565-residue protein sequence, read N- to C-terminus: Adenine deaminase (565 aa).

Belongs to the metallo-dependent hydrolases superfamily. Adenine deaminase family. The cofactor is Mn(2+).

The catalysed reaction is adenine + H2O + H(+) = hypoxanthine + NH4(+). This chain is Adenine deaminase, found in Cereibacter sphaeroides (strain ATCC 17023 / DSM 158 / JCM 6121 / CCUG 31486 / LMG 2827 / NBRC 12203 / NCIMB 8253 / ATH 2.4.1.) (Rhodobacter sphaeroides).